A 263-amino-acid polypeptide reads, in one-letter code: Esterase mokD (263 aa).

Catalysis depends on charge relay system residues Ser134, Asp208, and His236.

This sequence belongs to the LovG family.

The enzyme catalyses dihydromonacolin L-[lovastatin nonaketide synthase] + H2O = holo-[lovastatin nonaketide synthase] + dihydromonacolin L carboxylate + H(+). Its pathway is polyketide biosynthesis; lovastatin biosynthesis. Its function is as follows. Esterase; part of the gene cluster that mediates the biosynthesis of monakolin K, also known as lovastatin, and which acts as a potent competitive inhibitor of HMG-CoA reductase. Monakolin K biosynthesis is performed in two stages. The first stage is catalyzed by the nonaketide synthase mokA, which belongs to type I polyketide synthases and catalyzes the iterative nine-step formation of the polyketide. This PKS stage completed by the action of dehydrogenase mokE, which catalyzes the NADPH-dependent reduction of the unsaturated tetra-, penta- and heptaketide intermediates that arise during the mokA-mediated biosynthesis of the nonaketide chain and leads to dihydromonacolin L. Covalently bound dihydromonacolin L is released from mokA by the mokD esterase. Conversion of dihydromonacolin L into monacolin L and then monacolin J is subsequently performed with the participation of molecular oxygen and P450 monoogygenase mokC. Finally, mokF performs the conversion of monacoline J to monacoline K through the addition of the side-chain diketide moiety (2R)-2-methylbutanoate produced by the diketide synthase mokB. This Monascus pilosus (Red mold) protein is Esterase mokD.